A 351-amino-acid chain; its full sequence is Holliday junction branch migration complex subunit RuvB (351 aa).

Positions 1–12 (MGRFEDDAEVED) are enriched in acidic residues. Positions 1-23 (MGRFEDDAEVEDREVSPALTVGE) are disordered. The tract at residues 1–191 (MGRFEDDAEV…FGFTAHMDFY (191 aa)) is large ATPase domain (RuvB-L). ATP is bound by residues leucine 30, arginine 31, glycine 72, lysine 75, threonine 76, serine 77, 138-140 (EDF), arginine 181, tyrosine 191, and arginine 228. Threonine 76 provides a ligand contact to Mg(2+). Residues 192 to 262 (EPVELERVLA…IAKSALEVYD (71 aa)) form a small ATPAse domain (RuvB-S) region. Residues 265–351 (ELGLDRLDRA…TGIGQAGLFD (87 aa)) form a head domain (RuvB-H) region. DNA-binding residues include arginine 320 and arginine 325.

This sequence belongs to the RuvB family. As to quaternary structure, homohexamer. Forms an RuvA(8)-RuvB(12)-Holliday junction (HJ) complex. HJ DNA is sandwiched between 2 RuvA tetramers; dsDNA enters through RuvA and exits via RuvB. An RuvB hexamer assembles on each DNA strand where it exits the tetramer. Each RuvB hexamer is contacted by two RuvA subunits (via domain III) on 2 adjacent RuvB subunits; this complex drives branch migration. In the full resolvosome a probable DNA-RuvA(4)-RuvB(12)-RuvC(2) complex forms which resolves the HJ.

The protein resides in the cytoplasm. The enzyme catalyses ATP + H2O = ADP + phosphate + H(+). The RuvA-RuvB-RuvC complex processes Holliday junction (HJ) DNA during genetic recombination and DNA repair, while the RuvA-RuvB complex plays an important role in the rescue of blocked DNA replication forks via replication fork reversal (RFR). RuvA specifically binds to HJ cruciform DNA, conferring on it an open structure. The RuvB hexamer acts as an ATP-dependent pump, pulling dsDNA into and through the RuvAB complex. RuvB forms 2 homohexamers on either side of HJ DNA bound by 1 or 2 RuvA tetramers; 4 subunits per hexamer contact DNA at a time. Coordinated motions by a converter formed by DNA-disengaged RuvB subunits stimulates ATP hydrolysis and nucleotide exchange. Immobilization of the converter enables RuvB to convert the ATP-contained energy into a lever motion, pulling 2 nucleotides of DNA out of the RuvA tetramer per ATP hydrolyzed, thus driving DNA branch migration. The RuvB motors rotate together with the DNA substrate, which together with the progressing nucleotide cycle form the mechanistic basis for DNA recombination by continuous HJ branch migration. Branch migration allows RuvC to scan DNA until it finds its consensus sequence, where it cleaves and resolves cruciform DNA. This chain is Holliday junction branch migration complex subunit RuvB, found in Mycolicibacterium smegmatis (strain ATCC 700084 / mc(2)155) (Mycobacterium smegmatis).